The sequence spans 562 residues: Arginine--tRNA ligase (562 aa).

Residues Pro-121 to His-131 carry the 'HIGH' region motif.

It belongs to the class-I aminoacyl-tRNA synthetase family. As to quaternary structure, monomer.

It localises to the cytoplasm. The catalysed reaction is tRNA(Arg) + L-arginine + ATP = L-arginyl-tRNA(Arg) + AMP + diphosphate. This chain is Arginine--tRNA ligase, found in Limosilactobacillus fermentum (strain NBRC 3956 / LMG 18251) (Lactobacillus fermentum).